The chain runs to 115 residues: Non-specific lipid-transfer protein 4.2 (115 aa).

Residues 1-25 (MARAAATQLVLVAMVAAMLIVATDA) form the signal peptide. Disulfide bonds link cysteine 29–cysteine 77, cysteine 39–cysteine 54, cysteine 55–cysteine 97, and cysteine 75–cysteine 111.

It belongs to the plant LTP family.

Its function is as follows. Plant non-specific lipid-transfer proteins transfer phospholipids as well as galactolipids across membranes. May play a role in wax or cutin deposition in the cell walls of expanding epidermal cells and certain secretory tissues. This is Non-specific lipid-transfer protein 4.2 (LTP4.2) from Hordeum vulgare (Barley).